We begin with the raw amino-acid sequence, 338 residues long: SPbeta prophage-derived uncharacterized protein YonB (338 aa).

The sequence is that of SPbeta prophage-derived uncharacterized protein YonB (yonB) from Bacillus subtilis (strain 168).